A 179-amino-acid chain; its full sequence is Large ribosomal subunit protein uL6 (179 aa).

This sequence belongs to the universal ribosomal protein uL6 family. As to quaternary structure, part of the 50S ribosomal subunit.

Its function is as follows. This protein binds to the 23S rRNA, and is important in its secondary structure. It is located near the subunit interface in the base of the L7/L12 stalk, and near the tRNA binding site of the peptidyltransferase center. In Rippkaea orientalis (strain PCC 8801 / RF-1) (Cyanothece sp. (strain PCC 8801)), this protein is Large ribosomal subunit protein uL6.